Reading from the N-terminus, the 400-residue chain is CCA-adding enzyme (400 aa).

Residues G28 and R31 each coordinate ATP. CTP is bound by residues G28 and R31. D41 and D43 together coordinate Mg(2+). The ATP site is built by R112, D155, R158, R161, and R164. CTP is bound by residues R112, D155, R158, R161, and R164.

This sequence belongs to the tRNA nucleotidyltransferase/poly(A) polymerase family. Bacterial CCA-adding enzyme type 3 subfamily. Homodimer. Requires Mg(2+) as cofactor.

It catalyses the reaction a tRNA precursor + 2 CTP + ATP = a tRNA with a 3' CCA end + 3 diphosphate. It carries out the reaction a tRNA with a 3' CCA end + 2 CTP + ATP = a tRNA with a 3' CCACCA end + 3 diphosphate. Catalyzes the addition and repair of the essential 3'-terminal CCA sequence in tRNAs without using a nucleic acid template. Adds these three nucleotides in the order of C, C, and A to the tRNA nucleotide-73, using CTP and ATP as substrates and producing inorganic pyrophosphate. tRNA 3'-terminal CCA addition is required both for tRNA processing and repair. Also involved in tRNA surveillance by mediating tandem CCA addition to generate a CCACCA at the 3' terminus of unstable tRNAs. While stable tRNAs receive only 3'-terminal CCA, unstable tRNAs are marked with CCACCA and rapidly degraded. In Staphylococcus aureus (strain MRSA252), this protein is CCA-adding enzyme.